The chain runs to 104 residues: MDKIRKSDEVIVLTGKDKGKRGVVQRRVDANYLVVEGVNVAKKATKPNPMTGATGGIVDKLMPIHVSNVALFNAATGKADRAGFKDVDGKKVRVYKSSGEAVKV.

It belongs to the universal ribosomal protein uL24 family. As to quaternary structure, part of the 50S ribosomal subunit.

Functionally, one of two assembly initiator proteins, it binds directly to the 5'-end of the 23S rRNA, where it nucleates assembly of the 50S subunit. One of the proteins that surrounds the polypeptide exit tunnel on the outside of the subunit. The sequence is that of Large ribosomal subunit protein uL24 from Herminiimonas arsenicoxydans.